Reading from the N-terminus, the 270-residue chain is Aquaporin-11 (270 aa).

2 consecutive transmembrane segments (helical) span residues 5–25 and 59–79; these read IMTM…ISIC and FELG…GLFF. The short motif at 94–96 is the NPA 1 element; it reads DPS. A helical membrane pass occupies residues 120-140; it reads IMGAAVSYRFAKIFWSFGLMA. Residue Asn-148 is glycosylated (N-linked (GlcNAc...) asparagine). The next 2 helical transmembrane spans lie at 153 to 173 and 184 to 204; these read ASLQ…TIVN and MLIS…VSGG. An NPA 2 motif is present at residues 207–209; the sequence is NPT. The chain crosses the membrane as a helical span at residues 220-240; it reads GLSGPSFFLVYWFGPILGSSI.

This sequence belongs to the MIP/aquaporin (TC 1.A.8) family.

Its subcellular location is the membrane. It carries out the reaction H2O(in) = H2O(out). Its function is as follows. Probable intracellular unorthodox aquaporin that may modulate the water content and osmolytes during anhydrobiosis. This is Aquaporin-11 from Milnesium tardigradum (Water bear).